Here is a 314-residue protein sequence, read N- to C-terminus: Aspartate carbamoyltransferase catalytic subunit (314 aa).

The carbamoyl phosphate site is built by Arg58 and Thr59. Residue Lys86 coordinates L-aspartate. Residues Arg108, His136, and Gln139 each contribute to the carbamoyl phosphate site. The L-aspartate site is built by Arg169 and Arg223. Carbamoyl phosphate-binding residues include Gly264 and Pro265.

The protein belongs to the aspartate/ornithine carbamoyltransferase superfamily. ATCase family. As to quaternary structure, heterododecamer (2C3:3R2) of six catalytic PyrB chains organized as two trimers (C3), and six regulatory PyrI chains organized as three dimers (R2).

The enzyme catalyses carbamoyl phosphate + L-aspartate = N-carbamoyl-L-aspartate + phosphate + H(+). The protein operates within pyrimidine metabolism; UMP biosynthesis via de novo pathway; (S)-dihydroorotate from bicarbonate: step 2/3. Catalyzes the condensation of carbamoyl phosphate and aspartate to form carbamoyl aspartate and inorganic phosphate, the committed step in the de novo pyrimidine nucleotide biosynthesis pathway. The sequence is that of Aspartate carbamoyltransferase catalytic subunit from Opitutus terrae (strain DSM 11246 / JCM 15787 / PB90-1).